Here is a 711-residue protein sequence, read N- to C-terminus: Hydroperoxide isomerase ALOXE3 (711 aa).

Residues 2 to 119 enclose the PLAT domain; it reads AVYRLCVTTG…TVELRPGTAR (118 aa). One can recognise a Lipoxygenase domain in the interval 119 to 711; it reads RTICQDALPL…PPLIENSVSI (593 aa). Fe cation-binding residues include H408, H413, H588, N592, and I711.

Belongs to the lipoxygenase family. It depends on Fe cation as a cofactor.

The protein localises to the cytoplasm. The enzyme catalyses a hydroperoxyeicosatetraenoate = a hydroxy-epoxy-eicosatetraenoate. The catalysed reaction is a hydroperoxyeicosatetraenoate = an oxoeicosatetraenoate + H2O. It catalyses the reaction (12R)-hydroperoxy-(5Z,8Z,10E,14Z)-eicosatetraenoate = (8R)-hydroxy-(11R,12R)-epoxy-(5Z,9E,14Z)-eicosatrienoate. It carries out the reaction (12S)-hydroperoxy-(5Z,8Z,10E,14Z)-eicosatetraenoate = (8R)-hydroxy-(11S,12S)-epoxy-(5Z,9E,14Z)-eicosatrienoate. The enzyme catalyses (12S)-hydroperoxy-(5Z,8Z,10E,14Z)-eicosatetraenoate = (10R)-hydroxy-(11S,12S)-epoxy-(5Z,8Z,14Z)-eicosatrienoate. The catalysed reaction is (15S)-hydroperoxy-(5Z,8Z,11Z,13E)-eicosatetraenoate = (13R)-hydroxy-(14S,15S)-epoxy-(5Z,8Z,11Z)-eicosatrienoate. It catalyses the reaction (5S)-hydroperoxy-(6E,8Z,11Z,14Z)-eicosatetraenoate = 7R-hydroxy-5S,6S-epoxy-(8Z,11Z,14Z)-eicosatrienoate. It carries out the reaction (13S)-hydroperoxy-(9Z,11E)-octadecadienoate = 11-hydroxy-(12S,13S)-epoxy-(9Z)-octadecenoate. The enzyme catalyses N-[omega-(9R)-hydroperoxy-(10E,12Z)-octadecadienoyloxy]acyl-beta-D-glucosyl-(1&lt;-&gt;1)-octadecasphing-4E-enine = a N-[omega-(9R,10R)-epoxy-(13R)-hydroxy-(11E)-octadecenoyloxy]acyl-beta-D-glucosyl-(1&lt;-&gt;1)-sphing-4E-enine. The catalysed reaction is a N-[omega-(9R)-hydroperoxy-(10E,12Z)-octadecadienoyloxy]-acylsphin-4E-enine = a N-[omega-(9R,10R)-epoxy-(13R)-hydroxy-(11E)-octadecenoyloxy]-acylsphing-4E-enine. It catalyses the reaction (12R)-hydroperoxy-(5Z,8Z,10E,14Z)-eicosatetraenoate = 12-oxo-(5Z,8Z,10E,14Z)-eicosatetraenoate + H2O. It carries out the reaction (12S)-hydroperoxy-(5Z,8Z,10E,14Z)-eicosatetraenoate = 12-oxo-(5Z,8Z,10E,14Z)-eicosatetraenoate + H2O. The enzyme catalyses (15S)-hydroperoxy-(5Z,8Z,11Z,13E)-eicosatetraenoate = 15-oxo-(5Z,8Z,11Z,13E)-eicosatetraenoate + H2O. The catalysed reaction is (13S)-hydroperoxy-(9Z,11E)-octadecadienoate = 13-oxo-(9Z,11E)-octadecadienoate + H2O. It catalyses the reaction (8S)-hydroperoxy-(5Z,9E,11Z,14Z)-eicosatetraenoate = (10R)-hydroxy-(8S,9S)-epoxy-(5Z,11Z,14Z)-eicosatrienoate. It carries out the reaction (8R)-hydroperoxy-(5Z,9E,11Z,14Z)-eicosatetraenoate = 8-oxo-(5Z,9E,11Z,14Z)-eicosatetraenoate + H2O. The enzyme catalyses (8S)-hydroperoxy-(5Z,9E,11Z,14Z)-eicosatetraenoate = 8-oxo-(5Z,9E,11Z,14Z)-eicosatetraenoate + H2O. Its pathway is lipid metabolism; hydroperoxy eicosatetraenoic acid biosynthesis. It functions in the pathway lipid metabolism; sphingolipid metabolism. Functionally, non-heme iron-containing lipoxygenase which is atypical in that it displays a prominent hydroperoxide isomerase activity and a reduced lipoxygenases activity. The hydroperoxide isomerase activity catalyzes the isomerization of hydroperoxides, derived from arachidonic and linoleic acid by ALOX12B, into hepoxilin-type epoxyalcohols and ketones. In presence of oxygen, oxygenates polyunsaturated fatty acids, including arachidonic acid, to produce fatty acid hydroperoxides. In the skin, acts downstream of ALOX12B on the linoleate moiety of esterified omega-hydroxyacyl-sphingosine (EOS) ceramides to produce an epoxy-ketone derivative, a crucial step in the conjugation of omega-hydroxyceramide to membrane proteins. Therefore plays a crucial role in the synthesis of corneocytes lipid envelope and the establishment of the skin barrier to water loss. In parallel, it may have a signaling function in barrier formation through the production of hepoxilins metabolites. Also plays a role in adipocyte differentiation through hepoxilin A3 and hepoxilin B3 production which in turn activate PPARG. Through the production of hepoxilins in the spinal cord, it may regulate inflammatory tactile allodynia. This is Hydroperoxide isomerase ALOXE3 from Rattus norvegicus (Rat).